The chain runs to 311 residues: tRNA-cytidine(32) 2-sulfurtransferase (311 aa).

The short motif at 47 to 52 (SGGKDS) is the PP-loop motif element. [4Fe-4S] cluster is bound by residues Cys-122, Cys-125, and Cys-213.

This sequence belongs to the TtcA family. As to quaternary structure, homodimer. Requires Mg(2+) as cofactor. It depends on [4Fe-4S] cluster as a cofactor.

The protein localises to the cytoplasm. It catalyses the reaction cytidine(32) in tRNA + S-sulfanyl-L-cysteinyl-[cysteine desulfurase] + AH2 + ATP = 2-thiocytidine(32) in tRNA + L-cysteinyl-[cysteine desulfurase] + A + AMP + diphosphate + H(+). It participates in tRNA modification. Its function is as follows. Catalyzes the ATP-dependent 2-thiolation of cytidine in position 32 of tRNA, to form 2-thiocytidine (s(2)C32). The sulfur atoms are provided by the cysteine/cysteine desulfurase (IscS) system. The sequence is that of tRNA-cytidine(32) 2-sulfurtransferase from Shigella boydii serotype 18 (strain CDC 3083-94 / BS512).